Consider the following 286-residue polypeptide: tRNA (guanine-N(7)-)-methyltransferase (286 aa).

Residues 1–22 (MGRARPKSQKRGDYRVSRSQEN) are disordered. S-adenosyl-L-methionine is bound by residues Gly104, 127 to 128 (EI), 162 to 163 (NS), and Cys182. Asp185 is an active-site residue. 260 to 262 (TEE) serves as a coordination point for S-adenosyl-L-methionine.

This sequence belongs to the class I-like SAM-binding methyltransferase superfamily. TrmB family. Forms a complex with TRM82.

The protein resides in the nucleus. It carries out the reaction guanosine(46) in tRNA + S-adenosyl-L-methionine = N(7)-methylguanosine(46) in tRNA + S-adenosyl-L-homocysteine. It participates in tRNA modification; N(7)-methylguanine-tRNA biosynthesis. Its function is as follows. Catalyzes the formation of N(7)-methylguanine at position 46 (m7G46) in tRNA. This chain is tRNA (guanine-N(7)-)-methyltransferase, found in Colletotrichum orbiculare (strain 104-T / ATCC 96160 / CBS 514.97 / LARS 414 / MAFF 240422) (Cucumber anthracnose fungus).